Reading from the N-terminus, the 186-residue chain is MFMILIINNHGQYNHRIHRTLRYLQIPSELVPNTTPLDEIISRDPEGLILGGGPSLERSGNCVEYIQKLEIPILGICLGHQLIAKAYGGEVATAEAESYAQIELEILDEDDIFRGLGPRMSVWASHKDEVKKLPDEFDVLATSSICEVEAMKHHDKPVYGIQFHPEVHHTREGHRVFENFYDVCRS.

The Glutamine amidotransferase type-1 domain maps to 3-186 (MILIINNHGQ…FENFYDVCRS (184 aa)). Cys77 acts as the Nucleophile in catalysis. Active-site residues include His164 and Glu166.

Heterodimer composed of a glutamine amidotransferase subunit (A) and a GMP-binding subunit (B).

It carries out the reaction XMP + L-glutamine + ATP + H2O = GMP + L-glutamate + AMP + diphosphate + 2 H(+). Its pathway is purine metabolism; GMP biosynthesis; GMP from XMP (L-Gln route): step 1/1. In terms of biological role, catalyzes the synthesis of GMP from XMP. In Methanothermobacter thermautotrophicus (strain ATCC 29096 / DSM 1053 / JCM 10044 / NBRC 100330 / Delta H) (Methanobacterium thermoautotrophicum), this protein is GMP synthase [glutamine-hydrolyzing] subunit A.